Here is a 253-residue protein sequence, read N- to C-terminus: Triosephosphate isomerase (253 aa).

9–11 (NWK) serves as a coordination point for substrate. The active-site Electrophile is the His-95. The active-site Proton acceptor is Glu-167. Substrate is bound by residues Gly-173, Ser-213, and 234–235 (GG). Ser-213 bears the Phosphoserine mark.

The protein belongs to the triosephosphate isomerase family. In terms of assembly, homodimer.

It localises to the cytoplasm. The enzyme catalyses D-glyceraldehyde 3-phosphate = dihydroxyacetone phosphate. It functions in the pathway carbohydrate biosynthesis; gluconeogenesis. Its pathway is carbohydrate degradation; glycolysis; D-glyceraldehyde 3-phosphate from glycerone phosphate: step 1/1. Its function is as follows. Involved in the gluconeogenesis. Catalyzes stereospecifically the conversion of dihydroxyacetone phosphate (DHAP) to D-glyceraldehyde-3-phosphate (G3P). The chain is Triosephosphate isomerase from Bacillus licheniformis (strain ATCC 14580 / DSM 13 / JCM 2505 / CCUG 7422 / NBRC 12200 / NCIMB 9375 / NCTC 10341 / NRRL NRS-1264 / Gibson 46).